The chain runs to 274 residues: Ethanolamine ammonia-lyase small subunit (274 aa).

Residues V161, E182, and C211 each contribute to the adenosylcob(III)alamin site.

The protein belongs to the EutC family. The basic unit is a heterodimer which dimerizes to form tetramers. The heterotetramers trimerize; 6 large subunits form a core ring with 6 small subunits projecting outwards. Adenosylcob(III)alamin serves as cofactor.

It localises to the bacterial microcompartment. The catalysed reaction is ethanolamine = acetaldehyde + NH4(+). Its pathway is amine and polyamine degradation; ethanolamine degradation. Catalyzes the deamination of various vicinal amino-alcohols to oxo compounds. Allows this organism to utilize ethanolamine as the sole source of nitrogen and carbon in the presence of external vitamin B12. The protein is Ethanolamine ammonia-lyase small subunit of Pseudomonas fluorescens (strain ATCC BAA-477 / NRRL B-23932 / Pf-5).